The sequence spans 851 residues: Protein FAM13B (851 aa).

The Rho-GAP domain occupies 23 to 212 (IPLDELQQGG…GLLENYYEFF (190 aa)). Residues 556–565 (IKDAKHKNSD) are compositionally biased toward basic and acidic residues. A disordered region spans residues 556 to 611 (IKDAKHKNSDGEFAPQTRPRSNTLPKSFGSSLDHEDGESEGEPRVIQKEKTPSKEA). Residues 573–585 (RPRSNTLPKSFGS) show a composition bias toward polar residues. Positions 596–611 (GEPRVIQKEKTPSKEA) are enriched in basic and acidic residues.

It belongs to the FAM13 family.

This chain is Protein FAM13B (Fam13b), found in Mus musculus (Mouse).